Consider the following 897-residue polypeptide: DNA mismatch repair protein MutS (897 aa).

654-661 (GPNMAGKS) lines the ATP pocket.

It belongs to the DNA mismatch repair MutS family.

Functionally, this protein is involved in the repair of mismatches in DNA. It is possible that it carries out the mismatch recognition step. This protein has a weak ATPase activity. The sequence is that of DNA mismatch repair protein MutS from Maricaulis maris (strain MCS10) (Caulobacter maris).